The sequence spans 90 residues: uncharacterized protein (90 aa).

It belongs to the barstar family.

This is an uncharacterized protein from Escherichia coli O157:H7.